The following is a 625-amino-acid chain: Chaperone protein DnaK (625 aa).

Thr197 is subject to Phosphothreonine; by autocatalysis. The segment at 598–625 (MYKKDDNASGEQSGGKKKDDDVIDAEVE) is disordered.

It belongs to the heat shock protein 70 family.

Acts as a chaperone. This chain is Chaperone protein DnaK, found in Campylobacter curvus (strain 525.92).